Reading from the N-terminus, the 623-residue chain is DNA mismatch repair protein MutL (623 aa).

Residues 353–368 (AQQSAPRPANSYSPAS) show a composition bias toward polar residues. A disordered region spans residues 353–389 (AQQSAPRPANSYSPASWRTAPPAPRSEWSPQTAHPAH).

This sequence belongs to the DNA mismatch repair MutL/HexB family.

Functionally, this protein is involved in the repair of mismatches in DNA. It is required for dam-dependent methyl-directed DNA mismatch repair. May act as a 'molecular matchmaker', a protein that promotes the formation of a stable complex between two or more DNA-binding proteins in an ATP-dependent manner without itself being part of a final effector complex. The protein is DNA mismatch repair protein MutL of Brucella melitensis biotype 1 (strain ATCC 23456 / CCUG 17765 / NCTC 10094 / 16M).